Reading from the N-terminus, the 500-residue chain is Intracellular exo-alpha-(1-&gt;5)-L-arabinofuranosidase 1 (500 aa).

Alpha-L-arabinofuranose-binding residues include Glu27, Asn72, and Asn172. The active-site Proton donor/acceptor is Glu173. The alpha-L-arabinofuranose site is built by Tyr244, Glu292, and Gln349. The Nucleophile role is filled by Glu292.

It belongs to the glycosyl hydrolase 51 family. Homohexamer; trimer of dimers.

The protein resides in the cytoplasm. The catalysed reaction is Hydrolysis of terminal non-reducing alpha-L-arabinofuranoside residues in alpha-L-arabinosides.. The enzyme catalyses (20S)-ginsenoside Rc + H2O = L-arabinofuranose + (20S)-ginsenoside Rd. Its pathway is glycan metabolism; L-arabinan degradation. At a concentration of 5 mM, K(+), Cu(2+) and Ni(2+) exhibit inhibitory effects on the activity. Additionally, the chemical reagent SDS also displays a certain degree of inhibition. Enzymatic activity is largely unaffected by product feedback inhibition. Its function is as follows. Involved in the degradation of arabinan and is a key enzyme in the complete degradation of the plant cell wall. Catalyzes the cleavage of terminal alpha-(1-&gt;5)-arabinofuranosyl bonds in different hemicellulosic homopolysaccharides (branched and debranched arabinans). It acts preferentially on arabinotriose, arabinobiose and linear alpha-(1-&gt;5)-L-arabinan, and is much less effective on branched sugar beet arabinan. When expressed in E.coli, the recombinant enyzme can hydrolyze, with relatively low catalytic efficiency, the terminal alpha-L-arabinofuranoside at the C20 position of ginsenoside Rc to produce ginsenoside Rd, a rare ginsenoside that exhibits diverse and powerful pharmacological activities. The chain is Intracellular exo-alpha-(1-&gt;5)-L-arabinofuranosidase 1 from Bacillus subtilis (strain 168).